The chain runs to 408 residues: Multidrug resistance protein MdtG (408 aa).

11 consecutive transmembrane segments (helical) span residues 16–36 (LIVA…VMPF), 58–78 (IVFS…GGLA), 92–112 (LGMG…QFLI), 115–135 (ALLG…ATQV), 146–166 (TLST…GLLA), 173–193 (PVFF…LFCI), 224–244 (LFVT…ILTL), 256–276 (VAFI…LSAP), 290–310 (ILIT…YVQT), 319–339 (FLLG…LVYN), and 378–398 (AVFL…WNSL).

It belongs to the major facilitator superfamily. DHA1 family. MdtG (TC 2.A.1.2.20) subfamily.

Its subcellular location is the cell inner membrane. In terms of biological role, confers resistance to fosfomycin and deoxycholate. The sequence is that of Multidrug resistance protein MdtG from Escherichia coli O7:K1 (strain IAI39 / ExPEC).